Consider the following 557-residue polypeptide: T-complex protein 1 subunit eta (557 aa).

Position 2 is an N-acetylalanine (alanine 2). The segment at 529–557 is disordered; the sequence is PKSESAQGDAAGAMGRGRGGGRGRGMRRR. Positions 547–557 are enriched in basic residues; that stretch reads GGGRGRGMRRR.

Belongs to the TCP-1 chaperonin family. As to quaternary structure, heterooligomeric complex of about 850 to 900 kDa that forms two stacked rings, 12 to 16 nm in diameter. Interacts with KNAT1.

The protein resides in the cytoplasm. Its function is as follows. Molecular chaperone; assists the folding of proteins upon ATP hydrolysis. Known to play a role, in vitro, in the folding of actin and tubulin. In Arabidopsis thaliana (Mouse-ear cress), this protein is T-complex protein 1 subunit eta.